A 512-amino-acid chain; its full sequence is Spermatocyte protein spe-8 (512 aa).

The tract at residues 1 to 85 is disordered; that stretch reads MRSKSSEGDL…PKPSSDNNNS (85 aa). Positions 15–41 are enriched in basic and acidic residues; that stretch reads TQSREDKETTATYSEDTKPETQKERNA. Positions 68 to 78 are enriched in pro residues; the sequence is EAPPPPPPPKP. In terms of domain architecture, SH2 spans 114-205; the sequence is FYHGFMGRNE…YEGMTLICGL (92 aa). In terms of domain architecture, Protein kinase spans 217-485; it reads VTLNKKLGEG…KEEVGFHEIE (269 aa). Residues 223–231 and Lys-250 contribute to the ATP site; that span reads LGEGQFGEV. Asp-344 serves as the catalytic Proton acceptor.

Belongs to the protein kinase superfamily. Tyr protein kinase family. Fes/fps subfamily. Expression is restricted to male germline.

Its subcellular location is the cell membrane. The protein localises to the cytoplasm. It carries out the reaction L-tyrosyl-[protein] + ATP = O-phospho-L-tyrosyl-[protein] + ADP + H(+). Probable non-receptor tyrosine-protein kinase which plays a role in spermatid activation (spermiogenesis) in hermaphrodites. The sequence is that of Spermatocyte protein spe-8 from Caenorhabditis elegans.